We begin with the raw amino-acid sequence, 869 residues long: Aminopeptidase N (869 aa).

Residues Glu-122 and 262-266 (GAMEN) each bind substrate. His-298 provides a ligand contact to Zn(2+). Glu-299 serves as the catalytic Proton acceptor. Zn(2+)-binding residues include His-302 and Glu-321.

This sequence belongs to the peptidase M1 family. Requires Zn(2+) as cofactor.

Its subcellular location is the cell inner membrane. The enzyme catalyses Release of an N-terminal amino acid, Xaa-|-Yaa- from a peptide, amide or arylamide. Xaa is preferably Ala, but may be most amino acids including Pro (slow action). When a terminal hydrophobic residue is followed by a prolyl residue, the two may be released as an intact Xaa-Pro dipeptide.. Functionally, aminopeptidase N is involved in the degradation of intracellular peptides generated by protein breakdown during normal growth as well as in response to nutrient starvation. The protein is Aminopeptidase N (pepN) of Haemophilus influenzae (strain ATCC 51907 / DSM 11121 / KW20 / Rd).